The chain runs to 467 residues: tRNA-2-methylthio-N(6)-dimethylallyladenosine synthase (467 aa).

The 117-residue stretch at 22 to 138 folds into the MTTase N-terminal domain; it reads GSYWITTFGC…LETLLNKVET (117 aa). [4Fe-4S] cluster contacts are provided by cysteine 31, cysteine 67, cysteine 101, cysteine 173, cysteine 177, and cysteine 180. The Radical SAM core domain occupies 159-396; that stretch reads RDSSICAWVN…NSLVEIKAKE (238 aa). The TRAM domain occupies 399–467; that stretch reads VRYKDRVEEV…AFSLSGVIEN (69 aa).

Belongs to the methylthiotransferase family. MiaB subfamily. Monomer. [4Fe-4S] cluster is required as a cofactor.

The protein resides in the cytoplasm. It carries out the reaction N(6)-dimethylallyladenosine(37) in tRNA + (sulfur carrier)-SH + AH2 + 2 S-adenosyl-L-methionine = 2-methylsulfanyl-N(6)-dimethylallyladenosine(37) in tRNA + (sulfur carrier)-H + 5'-deoxyadenosine + L-methionine + A + S-adenosyl-L-homocysteine + 2 H(+). Functionally, catalyzes the methylthiolation of N6-(dimethylallyl)adenosine (i(6)A), leading to the formation of 2-methylthio-N6-(dimethylallyl)adenosine (ms(2)i(6)A) at position 37 in tRNAs that read codons beginning with uridine. The chain is tRNA-2-methylthio-N(6)-dimethylallyladenosine synthase from Prochlorococcus marinus (strain MIT 9211).